The following is a 130-amino-acid chain: Anti-adapter protein IraD (130 aa).

Belongs to the GpW/Gp25 family. IraD subfamily. In terms of assembly, interacts with RssB.

Its subcellular location is the cytoplasm. Functionally, inhibits RpoS proteolysis by regulating RssB activity, thereby increasing the stability of the sigma stress factor RpoS during oxidative stress. Its effect on RpoS stability is due to its interaction with RssB, which probably blocks the interaction of RssB with RpoS, and the consequent delivery of the RssB-RpoS complex to the ClpXP protein degradation pathway. The protein is Anti-adapter protein IraD of Escherichia coli (strain K12 / MC4100 / BW2952).